We begin with the raw amino-acid sequence, 416 residues long: UPF0761 membrane protein Rfer_2991 (416 aa).

The next 6 helical transmembrane spans lie at 60 to 80 (MALVPLVTVALAIFTAFPMFA), 117 to 137 (LGGAGIALLLVTAVALILTID), 156 to 176 (VLVYWAALTLGPLVLGVSLSI), 187 to 207 (VVGVMPGGVQFLLDVLQFFMV), 222 to 242 (WVKWSHAWAGGMFVSAGLELA), and 268 to 288 (ILLIWIYVAWIIVLLGAVIAA).

The protein belongs to the UPF0761 family.

It is found in the cell inner membrane. This Albidiferax ferrireducens (strain ATCC BAA-621 / DSM 15236 / T118) (Rhodoferax ferrireducens) protein is UPF0761 membrane protein Rfer_2991.